The chain runs to 551 residues: Eukaryotic translation initiation factor 3 subunit D-2 (551 aa).

The segment at 105-152 is disordered; it reads NNVRARGRTGRGSQAVGGPGGPAAGGSTANSTKYGKGRNTRNTQNVGR. The span at 119-128 shows a compositional bias: gly residues; sequence AVGGPGGPAA. Residues 290 to 304 form an RNA gate region; the sequence is QFDLLTVNETSLEPP.

It belongs to the eIF-3 subunit D family. In terms of assembly, component of the eukaryotic translation initiation factor 3 (eIF-3) complex. The eIF-3 complex interacts with pix.

The protein resides in the cytoplasm. In terms of biological role, mRNA cap-binding component of the eukaryotic translation initiation factor 3 (eIF-3) complex, which is involved in protein synthesis of a specialized repertoire of mRNAs and, together with other initiation factors, stimulates binding of mRNA and methionyl-tRNAi to the 40S ribosome. The eIF-3 complex specifically targets and initiates translation of a subset of mRNAs involved in cell proliferation. In the eIF-3 complex, eif3d specifically recognizes and binds the 7-methylguanosine cap of a subset of mRNAs. This is Eukaryotic translation initiation factor 3 subunit D-2 from Drosophila erecta (Fruit fly).